A 334-amino-acid polypeptide reads, in one-letter code: Fructose-1,6-bisphosphatase class 1 (334 aa).

Residues glutamate 90, aspartate 113, leucine 115, and aspartate 116 each contribute to the Mg(2+) site. Substrate-binding positions include 116–119 (DGSS), asparagine 209, tyrosine 242, and lysine 272. Glutamate 278 provides a ligand contact to Mg(2+).

The protein belongs to the FBPase class 1 family. As to quaternary structure, homotetramer. Mg(2+) serves as cofactor.

It localises to the cytoplasm. It catalyses the reaction beta-D-fructose 1,6-bisphosphate + H2O = beta-D-fructose 6-phosphate + phosphate. It participates in carbohydrate biosynthesis; gluconeogenesis. This Actinobacillus pleuropneumoniae serotype 7 (strain AP76) protein is Fructose-1,6-bisphosphatase class 1.